The sequence spans 236 residues: 2,3,4,5-tetrahydropyridine-2,6-dicarboxylate N-acetyltransferase (236 aa).

The protein belongs to the transferase hexapeptide repeat family. DapH subfamily.

The catalysed reaction is (S)-2,3,4,5-tetrahydrodipicolinate + acetyl-CoA + H2O = L-2-acetamido-6-oxoheptanedioate + CoA. The protein operates within amino-acid biosynthesis; L-lysine biosynthesis via DAP pathway; LL-2,6-diaminopimelate from (S)-tetrahydrodipicolinate (acetylase route): step 1/3. Catalyzes the transfer of an acetyl group from acetyl-CoA to tetrahydrodipicolinate. In Listeria monocytogenes serotype 4b (strain CLIP80459), this protein is 2,3,4,5-tetrahydropyridine-2,6-dicarboxylate N-acetyltransferase.